A 278-amino-acid polypeptide reads, in one-letter code: Probable endonuclease 4 (278 aa).

The Zn(2+) site is built by His66, His106, Glu140, Asp172, His175, His209, Asp222, His224, and Glu254.

Belongs to the AP endonuclease 2 family. Requires Zn(2+) as cofactor.

It catalyses the reaction Endonucleolytic cleavage to 5'-phosphooligonucleotide end-products.. Functionally, endonuclease IV plays a role in DNA repair. It cleaves phosphodiester bonds at apurinic or apyrimidinic (AP) sites, generating a 3'-hydroxyl group and a 5'-terminal sugar phosphate. This chain is Probable endonuclease 4, found in Haloquadratum walsbyi (strain DSM 16790 / HBSQ001).